Reading from the N-terminus, the 305-residue chain is tRNA pseudouridine synthase B (305 aa).

Residue Asp39 is the Nucleophile of the active site.

The protein belongs to the pseudouridine synthase TruB family. Type 1 subfamily.

It carries out the reaction uridine(55) in tRNA = pseudouridine(55) in tRNA. In terms of biological role, responsible for synthesis of pseudouridine from uracil-55 in the psi GC loop of transfer RNAs. This is tRNA pseudouridine synthase B from Staphylococcus aureus (strain Newman).